The sequence spans 210 residues: MTKGILGRKIGMTQVFAENGELIPVTVIEATPNVVLQKKTTETDGYNAIQLGFEDKREKLANKPEQGHVAKASTAPKRFIREIRDADVDGLEVGQEVKVEVFAAGETVDVTGISKGKGFQGAIKRHGQSRGPMSHGSRYHRRPGSMGPVAPNRVFKGKKLAGRMGGDQITIQNLEIVQVDVERNLLLIKGNVPGAKKSLVVVQGAVKASK.

The interval 119–151 (FQGAIKRHGQSRGPMSHGSRYHRRPGSMGPVAP) is disordered.

Belongs to the universal ribosomal protein uL3 family. As to quaternary structure, part of the 50S ribosomal subunit. Forms a cluster with proteins L14 and L19.

Its function is as follows. One of the primary rRNA binding proteins, it binds directly near the 3'-end of the 23S rRNA, where it nucleates assembly of the 50S subunit. This chain is Large ribosomal subunit protein uL3, found in Bacillus cytotoxicus (strain DSM 22905 / CIP 110041 / 391-98 / NVH 391-98).